The primary structure comprises 170 residues: Small ribosomal subunit protein uS5 (170 aa).

Residues 12-75 form the S5 DRBM domain; the sequence is WSELLVSVRR…NAAKKSMIRV (64 aa).

It belongs to the universal ribosomal protein uS5 family. Part of the 30S ribosomal subunit. Contacts proteins S4 and S8.

Functionally, with S4 and S12 plays an important role in translational accuracy. Located at the back of the 30S subunit body where it stabilizes the conformation of the head with respect to the body. This Wolbachia sp. subsp. Brugia malayi (strain TRS) protein is Small ribosomal subunit protein uS5.